The following is a 303-amino-acid chain: Putative S-adenosyl-L-methionine-dependent methyltransferase ML2020 (303 aa).

S-adenosyl-L-methionine-binding positions include Asp130 and 159–160 (DL).

The protein belongs to the UPF0677 family.

Exhibits S-adenosyl-L-methionine-dependent methyltransferase activity. This Mycobacterium leprae (strain TN) protein is Putative S-adenosyl-L-methionine-dependent methyltransferase ML2020.